The following is a 265-amino-acid chain: MPSKKVIKKKVAAVPAHIRAQTQVQKEVKNPLFEKRARNFNIGQDIQPKKDVTRFVKWPKYIRLQRQSAILQKRLKVPPTINQFRTALDSQSARQAFKLLDKYRPESTEAKKNRLRARAEARAAGKKEEVTKRPNTVRHGVNTITRLVETRRAQLVLIAHDVNPLEIVLHLPALCRKYNVPYAIIKGKASLGTVVRRKTTAAVALVDVNPEDKSALNKLVETVNNNFSERHEEIRKHWGGGVMSAKSDAKKLKIERARARDLGKL.

It belongs to the eukaryotic ribosomal protein eL8 family. As to quaternary structure, interacts with cmd-1 in the presence of Ca(2+).

The polypeptide is Large ribosomal subunit protein eL8 (Caenorhabditis elegans).